We begin with the raw amino-acid sequence, 633 residues long: Carbon monoxide dehydrogenase 2 (633 aa).

[4Fe-4S] cluster is bound by residues cysteine 44, cysteine 53, cysteine 56, cysteine 61, and cysteine 73. Residues histidine 264, cysteine 343, cysteine 453, cysteine 484, and cysteine 525 each contribute to the [Ni-4Fe-5S] cluster site.

It belongs to the Ni-containing carbon monoxide dehydrogenase family. As to quaternary structure, homodimer. It depends on [4Fe-4S] cluster as a cofactor. The cofactor is [Ni-4Fe-5S] cluster.

The enzyme catalyses CO + 2 oxidized [2Fe-2S]-[ferredoxin] + H2O = 2 reduced [2Fe-2S]-[ferredoxin] + CO2 + 2 H(+). CODH oxidizes carbon monoxide coupled, via CooF, to the reduction of a hydrogen cation by a hydrogenase (possibly CooH). This Methanosarcina acetivorans (strain ATCC 35395 / DSM 2834 / JCM 12185 / C2A) protein is Carbon monoxide dehydrogenase 2 (cooS2).